Consider the following 1769-residue polypeptide: Tight junction protein 1 (1769 aa).

The region spanning 23 to 110 (TVTLHRAPGF…NAKITIRRKK (88 aa)) is the PDZ 1 domain. The segment covering 102–112 (AKITIRRKKKV) has biased composition (basic residues). A disordered region spans residues 102-188 (AKITIRRKKK…QPPKPTKVTL (87 aa)). Positions 123-135 (PVSENEDSYDEEV) are enriched in acidic residues. Serine 125 carries the phosphoserine modification. A Phosphotyrosine modification is found at tyrosine 131. The segment covering 148–174 (RRSEKSWARDRSASRERSLSPRSDRRS) has biased composition (basic and acidic residues). Phosphoserine is present on residues serine 174, serine 177, and serine 178. A Phosphothreonine modification is found at threonine 184. Residues 185-263 (KVTLVKSRKN…KLKMVVQRDE (79 aa)) form the PDZ 2 domain. Phosphoserine occurs at positions 211 and 240. At threonine 266 the chain carries Phosphothreonine. A phosphoserine mark is found at serine 274, serine 276, serine 279, serine 283, serine 289, serine 293, serine 296, serine 299, serine 322, serine 328, serine 333, serine 336, and serine 352. Residues 295–362 (ASDHSGRSHD…TPVKHADDHT (68 aa)) are disordered. Residues 298–326 (HSGRSHDRPPRHSRSRSPDQRSEPSDHSR) are compositionally biased toward basic and acidic residues. Phosphothreonine is present on threonine 353. The PDZ 3 domain occupies 420–501 (SMKLVKFRKG…GEEVTILAQK (82 aa)). In terms of domain architecture, SH3 spans 515–583 (GDSFYIRTHF…PNKNRAEQLA (69 aa)). The Guanylate kinase-like domain occupies 609–790 (SKRNLRKSRE…WYGALKEAIQ (182 aa)). Residues serine 616 and serine 621 each carry the phosphoserine modification. Residues 632-875 (YERVVLREAG…GTPPESAITR (244 aa)) are occludin (OCLN)-binding region. Residue threonine 808 is modified to Phosphothreonine. 2 positions are modified to phosphoserine: serine 809 and serine 820. Tyrosine 821 is modified (phosphotyrosine). 3 positions are modified to phosphoserine: serine 823, serine 827, and serine 836. 2 disordered regions span residues 824-976 (APGS…LRTP) and 1010-1067 (EMMR…SYTD). Residues threonine 845, threonine 847, threonine 853, threonine 860, and threonine 867 each carry the phosphothreonine modification. A compositionally biased stretch (basic and acidic residues) spans 878–891 (EPVREDSSGMHHEN). Low complexity predominate over residues 892–905 (QTYPPYSPQAQPQP). Serine 911 is modified (phosphoserine). Polar residues-rich tracts occupy residues 933-952 (PETN…TLTN) and 962-976 (PSTS…LRTP). Serine 967 carries the post-translational modification Phosphoserine. A Phosphoserine modification is found at serine 1070. Disordered stretches follow at residues 1091–1212 (SYYD…KAGH), 1224–1261 (PLIP…MKPQ), and 1273–1589 (KRSA…EFDS). Residues 1108–1124 (QHPRDLDSRQHPEESSE) show a composition bias toward basic and acidic residues. A Phosphoserine modification is found at serine 1138. Phosphotyrosine is present on residues tyrosine 1139 and tyrosine 1164. The segment at 1150-1370 (RTSTLRHEEQ…FDRRSFENKP (221 aa)) is actin-binding region (ABR). Positions 1273-1286 (KRSASLENKKDENH) are enriched in basic and acidic residues. The segment covering 1300 to 1310 (PGAPIIGPKPT) has biased composition (pro residues). Residues 1335-1346 (PPEDIVRSNHYD) are compositionally biased toward basic and acidic residues. Tyrosine 1353 bears the Phosphotyrosine mark. Residue serine 1365 is modified to Phosphoserine. The segment covering 1387 to 1401 (HSQNQTNFSSYSSKG) has biased composition (polar residues). A compositionally biased stretch (basic and acidic residues) spans 1402–1419 (KSPEADAPDRSFGEKRYE). Residue serine 1412 is modified to Phosphoserine. Polar residues-rich tracts occupy residues 1460–1471 (NSISLDFQNSLV) and 1514–1523 (AEQTQKTVTP). The segment covering 1539 to 1548 (PFERKFESPK) has biased composition (basic and acidic residues). Serine 1546 and serine 1618 each carry phosphoserine. A ZU5 domain is found at 1635–1769 (ATARGVFNNN…NCVSVLIDHF (135 aa)).

Belongs to the MAGUK family. In terms of assembly, homodimer. Forms heterodimers TJP3. Forms a heterodimer (via PDZ2 domain) with TJP2/ZO2 (via PDZ2 domain). Interacts with OCLN. Interacts with CALM, claudins, CGN/cingulin, CXADR, GJA12, GJD3 and UBN1. Interacts (via ZU5 domain) with CDC42BPB and MYZAP. Interacts (via PDZ domain) with GJA1. Interacts (via PDZ domains) with ANKRD2. Interacts with POPDC1 (via the C-terminus cytoplasmic tail). Interacts with HSPA4. Interacts with KIRREL1. Interacts with DLL1. Interacts with USP53 (via the C-terminal region). Interacts with DNMBP (via C-terminal domain); required for the apical cell-cell junction localization of DNMBP. Interacts with SPEF1. Interacts (via N-terminus) with CTNNA1. Interacts with CLDN18. Interacts with CLDN16 (via TRV motif); this is a prerequisite for anchoring of CLDN16 at the tight junction. Interacts with PKP1; the interaction facilitates TJP1/ZO-1 localization to the plasma membrane. Interacts with PATJ (via PDZ1-6 domains); the interaction is required for attachment and extension of TJP1/ZO1 condensates along the apical cell interface. Phosphorylated at tyrosine redidues in response to epidermal growth factor (EGF). This response is dependent on an intact actin microfilament system. Dephosphorylated by PTPRJ.

The protein resides in the cell membrane. It localises to the cell junction. It is found in the tight junction. The protein localises to the gap junction. In terms of biological role, TJP1, TJP2, and TJP3 are closely related scaffolding proteins that link tight junction (TJ) transmembrane proteins such as claudins, junctional adhesion molecules, and occludin to the actin cytoskeleton. Forms a multistranded TJP1/ZO1 condensate which elongates to form a tight junction belt, the belt is anchored at the apical cell membrane via interaction with PATJ. The tight junction acts to limit movement of substances through the paracellular space and as a boundary between the compositionally distinct apical and basolateral plasma membrane domains of epithelial and endothelial cells. Necessary for lumenogenesis, and particularly efficient epithelial polarization and barrier formation. Plays a role in the regulation of cell migration by targeting CDC42BPBb to the leading edge of migrating cells. With TJP2 and TJP3, participates in the junctional retention and stability of the transcription factor DBPA, but is not involved in its shuttling to the nucleus. May play a role in mediating cell morphology changes during ameloblast differentiation via its role in tight junctions. The sequence is that of Tight junction protein 1 from Canis lupus familiaris (Dog).